Reading from the N-terminus, the 170-residue chain is Head completion protein (170 aa).

The protein resides in the virion. Its function is as follows. Head completion protein that closes the capsid once the viral DNA has been packaged. Probably part of the head-tail connector by binding to the portal protein and to the tail completion protein. This chain is Head completion protein, found in Escherichia coli (Enterobacteria phage T5).